Here is a 331-residue protein sequence, read N- to C-terminus: tRNA-dihydrouridine(20/20a) synthase (331 aa).

FMN contacts are provided by residues 18 to 20 and Gln70; that span reads PML. Residue Cys100 is the Proton donor of the active site. FMN-binding positions include Lys139, His172, 212–214, and 234–235; these read NGG and GR.

The protein belongs to the Dus family. DusA subfamily. It depends on FMN as a cofactor.

The catalysed reaction is 5,6-dihydrouridine(20) in tRNA + NADP(+) = uridine(20) in tRNA + NADPH + H(+). It catalyses the reaction 5,6-dihydrouridine(20) in tRNA + NAD(+) = uridine(20) in tRNA + NADH + H(+). The enzyme catalyses 5,6-dihydrouridine(20a) in tRNA + NADP(+) = uridine(20a) in tRNA + NADPH + H(+). It carries out the reaction 5,6-dihydrouridine(20a) in tRNA + NAD(+) = uridine(20a) in tRNA + NADH + H(+). Catalyzes the synthesis of 5,6-dihydrouridine (D), a modified base found in the D-loop of most tRNAs, via the reduction of the C5-C6 double bond in target uridines. Specifically modifies U20 and U20a in tRNAs. The chain is tRNA-dihydrouridine(20/20a) synthase from Escherichia coli O6:H1 (strain CFT073 / ATCC 700928 / UPEC).